The chain runs to 338 residues: L-serine dehydratase (338 aa).

The residue at position 39 (Lys39) is an N6-(pyridoxal phosphate)lysine.

The protein belongs to the serine/threonine dehydratase family. Pyridoxal 5'-phosphate serves as cofactor.

It is found in the cytoplasm. The catalysed reaction is L-serine = pyruvate + NH4(+). Its pathway is carbohydrate biosynthesis; gluconeogenesis. This is L-serine dehydratase (SDL1) from Saccharomyces cerevisiae (strain YJM789) (Baker's yeast).